The chain runs to 215 residues: Probable transaldolase (215 aa).

The active-site Schiff-base intermediate with substrate is the Lys-83.

The protein belongs to the transaldolase family. Type 3B subfamily.

Its subcellular location is the cytoplasm. It carries out the reaction D-sedoheptulose 7-phosphate + D-glyceraldehyde 3-phosphate = D-erythrose 4-phosphate + beta-D-fructose 6-phosphate. Its pathway is carbohydrate degradation; pentose phosphate pathway; D-glyceraldehyde 3-phosphate and beta-D-fructose 6-phosphate from D-ribose 5-phosphate and D-xylulose 5-phosphate (non-oxidative stage): step 2/3. Functionally, transaldolase is important for the balance of metabolites in the pentose-phosphate pathway. The protein is Probable transaldolase of Bdellovibrio bacteriovorus (strain ATCC 15356 / DSM 50701 / NCIMB 9529 / HD100).